We begin with the raw amino-acid sequence, 181 residues long: Inner membrane-spanning protein YciB (181 aa).

A run of 5 helical transmembrane segments spans residues 10–30, 50–70, 80–100, 118–138, and 148–168; these read LVIF…GALI, MHLI…VFHD, IIYS…KSIL, VTWY…YVAF, and FKVF…VFYL.

It belongs to the YciB family.

It localises to the cell inner membrane. Its function is as follows. Plays a role in cell envelope biogenesis, maintenance of cell envelope integrity and membrane homeostasis. This chain is Inner membrane-spanning protein YciB, found in Shewanella baltica (strain OS223).